Consider the following 86-residue polypeptide: Large ribosomal subunit protein bL31B (86 aa).

Belongs to the bacterial ribosomal protein bL31 family. Type B subfamily. In terms of assembly, part of the 50S ribosomal subunit.

This is Large ribosomal subunit protein bL31B from Erwinia tasmaniensis (strain DSM 17950 / CFBP 7177 / CIP 109463 / NCPPB 4357 / Et1/99).